Here is a 160-residue protein sequence, read N- to C-terminus: Phosphopantetheine adenylyltransferase (160 aa).

Ser-10 contacts substrate. ATP is bound by residues 10–11 and His-18; that span reads SF. Positions 42, 74, and 88 each coordinate substrate. ATP-binding positions include 89-91, Glu-99, and 124-130; these read GLR and YSFISST.

The protein belongs to the bacterial CoaD family. Homohexamer. The cofactor is Mg(2+).

It localises to the cytoplasm. It carries out the reaction (R)-4'-phosphopantetheine + ATP + H(+) = 3'-dephospho-CoA + diphosphate. Its pathway is cofactor biosynthesis; coenzyme A biosynthesis; CoA from (R)-pantothenate: step 4/5. Its function is as follows. Reversibly transfers an adenylyl group from ATP to 4'-phosphopantetheine, yielding dephospho-CoA (dPCoA) and pyrophosphate. The chain is Phosphopantetheine adenylyltransferase from Leptospira borgpetersenii serovar Hardjo-bovis (strain L550).